Reading from the N-terminus, the 771-residue chain is Endoplasmin homolog (771 aa).

An N-terminal signal peptide occupies residues 1 to 24 (MANSSLLRVVLVALLLLGSVTVSA). ATP contacts are provided by Asn-63, Asp-109, and Phe-160. Residue Asn-63 is glycosylated (N-linked (GlcNAc...) asparagine). Residues 254–282 (AATPESAAEERSLDEGAVEEDPDKEGDTQ) form a disordered region. 2 N-linked (GlcNAc...) asparagine glycosylation sites follow: Asn-306 and Asn-402. Residues 727-771 (ADDSLLPPDDAEYTVSDTETEEEEEQPKVDTNAHEEAETDGEGDL) are disordered. A compositionally biased stretch (basic and acidic residues) spans 752-762 (QPKVDTNAHEE). Positions 768–771 (EGDL) match the Prevents secretion from ER motif.

It belongs to the heat shock protein 90 family. As to quaternary structure, homotetramer.

Its subcellular location is the endoplasmic reticulum. Molecular chaperone that functions in the processing and transport of secreted proteins. Required for the synthesis of lipophosphoglycan (LPG), a cell surface glycoconjugate. Necessary for the attachment of the galactosyl residue to the mannose within the phosphoglycan repeats of the nascent LPG chain. Also required for addition of phosphoglycan to acid phosphatase. Not required for normal growth. Has ATPase activity. Binds heparin with micromolar affinity which may facilitate infection of host cells. This is Endoplasmin homolog from Leishmania donovani.